The following is a 548-amino-acid chain: Folylpolyglutamate synthase (548 aa).

130-133 (GKGS) is an ATP binding site. Residues Ser157, Glu234, and His262 each contribute to the Mg(2+) site. ATP is bound by residues Arg382 and Asp396.

The protein belongs to the folylpolyglutamate synthase family. A monovalent cation is required as a cofactor.

The protein resides in the mitochondrion inner membrane. It is found in the mitochondrion matrix. It localises to the cytoplasm. It carries out the reaction (6S)-5,6,7,8-tetrahydrofolyl-(gamma-L-Glu)(n) + L-glutamate + ATP = (6S)-5,6,7,8-tetrahydrofolyl-(gamma-L-Glu)(n+1) + ADP + phosphate + H(+). Its pathway is cofactor biosynthesis; tetrahydrofolylpolyglutamate biosynthesis. Catalyzes conversion of folates to polyglutamate derivatives allowing concentration of folate compounds in the cell and the intracellular retention of these cofactors, which are important substrates for most of the folate-dependent enzymes that are involved in one-carbon transfer reactions involved in purine, pyrimidine and amino acid synthesis. Required for methionine synthesis and maintenance of intact mitochondrial DNA. Involved in telomere maintenance. The sequence is that of Folylpolyglutamate synthase from Saccharomyces cerevisiae (strain FostersO) (Baker's yeast).